A 236-amino-acid chain; its full sequence is Small ribosomal subunit protein uS2c (236 aa).

Belongs to the universal ribosomal protein uS2 family.

The protein localises to the plastid. The protein resides in the chloroplast. In Zea mays (Maize), this protein is Small ribosomal subunit protein uS2c (rps2).